The following is a 249-amino-acid chain: Flavin-dependent thymidylate synthase (249 aa).

A ThyX domain is found at Val-8–Ser-225. FAD contacts are provided by residues Ser-62, Arg-86–Arg-88, and Gln-94. Residues Gln-83–Arg-86, Gln-94–Arg-98, and Arg-164 contribute to the dUMP site. A ThyX motif motif is present at residues Arg-86–Ser-96. FAD is bound by residues Asn-180–Arg-182 and Asn-186. A dUMP-binding site is contributed by Arg-191. Arg-191 acts as the Involved in ionization of N3 of dUMP, leading to its activation in catalysis.

The protein belongs to the thymidylate synthase ThyX family. In terms of assembly, homotetramer. FAD serves as cofactor.

The catalysed reaction is dUMP + (6R)-5,10-methylene-5,6,7,8-tetrahydrofolate + NADPH + H(+) = dTMP + (6S)-5,6,7,8-tetrahydrofolate + NADP(+). Its pathway is pyrimidine metabolism; dTTP biosynthesis. Functionally, catalyzes the reductive methylation of 2'-deoxyuridine-5'-monophosphate (dUMP) to 2'-deoxythymidine-5'-monophosphate (dTMP) while utilizing 5,10-methylenetetrahydrofolate (mTHF) as the methyl donor, and NADPH and FADH(2) as the reductant. The sequence is that of Flavin-dependent thymidylate synthase from Clostridium tetani (strain Massachusetts / E88).